The following is a 179-amino-acid chain: Natural killer cells antigen CD94 (179 aa).

Residues 1-10 are Cytoplasmic-facing; sequence MAVSRITRWR. Residues 11-31 form a helical; Signal-anchor for type II membrane protein membrane-spanning segment; the sequence is LMSVIFGIKCLFLMVTLGVLL. At 32–179 the chain is on the extracellular side; sequence INSFTIQNIQ…NRYICKKLPI (148 aa). 4 cysteine pairs are disulfide-bonded: cysteine 58–cysteine 70, cysteine 61–cysteine 72, cysteine 89–cysteine 174, and cysteine 152–cysteine 166. Positions 68–175 constitute a C-type lectin domain; the sequence is HQCNCYFISK…CENKNRYICK (108 aa). N-linked (GlcNAc...) asparagine glycans are attached at residues asparagine 93 and asparagine 109.

In terms of assembly, can form disulfide-bonded heterodimer with NKG2 family members KLRC1 and KLRC2. KLRD1-KLRC1 heterodimer interacts with peptide-bound MHC-E-B2M heterotrimeric complex. KLRD1 plays a prominent role in directly interacting with MHC-E. KLRD1-KLRC1 interacts with much higher affinity with peptide-bound MHC-E-B2M than KLRD1-KLRC2. Interacts with the adapter protein TYROBP/DAP12; this interaction is required for cell surface expression and cell activation.

Its subcellular location is the cell membrane. Functionally, immune receptor involved in self-nonself discrimination. In complex with KLRC1 or KLRC2 on cytotoxic and regulatory lymphocyte subsets, recognizes non-classical major histocompatibility (MHC) class Ib molecule MHC-E loaded with self-peptides derived from the signal sequence of classical MHC class Ia and non-classical MHC class Ib molecules. Enables cytotoxic cells to monitor the expression of MHC class I molecules in healthy cells and to tolerate self. Primarily functions as a ligand binding subunit as it lacks the capacity to signal. Its function is as follows. KLRD1-KLRC1 acts as an immune inhibitory receptor. Key inhibitory receptor on natural killer (NK) cells that regulates their activation and effector functions. Dominantly counteracts T cell receptor signaling on a subset of memory/effector CD8-positive T cells as part of an antigen-driven response to avoid autoimmunity. On intraepithelial CD8-positive gamma-delta regulatory T cells triggers TGFB1 secretion, which in turn limits the cytotoxic programming of intraepithelial CD8-positive alpha-beta T cells, distinguishing harmless from pathogenic antigens. In MHC-E-rich tumor microenvironment, acts as an immune inhibitory checkpoint and may contribute to progressive loss of effector functions of NK cells and tumor-specific T cells, a state known as cell exhaustion. Upon MHC-E-peptide binding, transmits intracellular signals through KLRC1 immunoreceptor tyrosine-based inhibition motifs (ITIMs) by recruiting INPP5D/SHIP-1 and INPPL1/SHIP-2 tyrosine phosphatases to ITIMs, and ultimately opposing signals transmitted by activating receptors through dephosphorylation of proximal signaling molecules. In terms of biological role, KLRD1-KLRC2 acts as an immune activating receptor. On cytotoxic lymphocyte subsets recognizes MHC-E loaded with signal sequence-derived peptides from non-classical MHC class Ib MHC-G molecules, likely playing a role in the generation and effector functions of adaptive NK cells and in maternal-fetal tolerance during pregnancy. Regulates the effector functions of terminally differentiated cytotoxic lymphocyte subsets, and in particular may play a role in adaptive NK cell response to viral infection. Upon MHC-E-peptide binding, transmits intracellular signals via the adapter protein TYROBP/DAP12, triggering the phosphorylation of proximal signaling molecules and cell activation. This chain is Natural killer cells antigen CD94 (Klrd1), found in Mus musculus (Mouse).